Here is a 132-residue protein sequence, read N- to C-terminus: Large ribosomal subunit protein bL17 (132 aa).

Belongs to the bacterial ribosomal protein bL17 family. Part of the 50S ribosomal subunit. Contacts protein L32.

The protein is Large ribosomal subunit protein bL17 of Albidiferax ferrireducens (strain ATCC BAA-621 / DSM 15236 / T118) (Rhodoferax ferrireducens).